Reading from the N-terminus, the 340-residue chain is Guanine nucleotide-binding protein G(I)/G(S)/G(T) subunit beta-1 (340 aa).

Residue S2 is modified to N-acetylserine. Residue S2 is modified to Phosphoserine. WD repeat units follow at residues 46-94 (RTRR…HAIP), 95-140 (LRSS…RELA), 141-181 (GHTG…TTFT), 182-223 (GHTG…QTFT), 224-267 (GHES…YSHD), 268-309 (NIIC…GVLA), and 310-340 (GHDNRVSCLGVTDDGMAVATGSWDSFLKIWN). H266 bears the Phosphohistidine mark.

It belongs to the WD repeat G protein beta family. In terms of assembly, g proteins are composed of 3 units, alpha, beta and gamma. The heterodimer formed by GNB1 and GNG2 interacts with ARHGEF5. The heterodimer formed by GNB1 and GNG2 interacts with GRK2. Forms a complex with GNAO1 and GNG3. Interacts with ARHGEF18 and RASD2. Forms complexes with TAS2R14 and G-proteins; these complexes play a role in the perception of bitterness. Component of the TAS2R14-GNAI1 complex, consisting of TAS2R14, GNAI1, GNB1 and GNG2. Component of the TAS2R14-GNAT3 complex, consisting of TAS2R14, GNAT3, GNB1 and GNG2. Component of the TAS2R14-GNAS2 complex, consisting of TAS2R14, GNAS2, GNB1 and GNG2. Post-translationally, phosphorylation at His-266 by NDKB contributes to G protein activation by increasing the high energetic phosphate transfer onto GDP.

Its function is as follows. Guanine nucleotide-binding proteins (G proteins) are involved as a modulator or transducer in various transmembrane signaling systems. The beta and gamma chains are required for the GTPase activity, for replacement of GDP by GTP, and for G protein-effector interaction. The chain is Guanine nucleotide-binding protein G(I)/G(S)/G(T) subunit beta-1 (GNB1) from Cricetulus griseus (Chinese hamster).